We begin with the raw amino-acid sequence, 166 residues long: Urease accessory protein UreE (166 aa).

It belongs to the UreE family.

The protein localises to the cytoplasm. Functionally, involved in urease metallocenter assembly. Binds nickel. Probably functions as a nickel donor during metallocenter assembly. The protein is Urease accessory protein UreE of Azotobacter vinelandii (strain DJ / ATCC BAA-1303).